A 155-amino-acid polypeptide reads, in one-letter code: MSFVIWITGPSGAGKTTLANALYKKLESMGYRVELLDGDGVRRKLYPNLGFSEEERWMHNRVVVEMARRLSRNGIITIVSVVSPYRAWREYARKEIEKFVEVYPRCPLEVRMKRDPKGLYSKALRGEIKGLTGLDGEYEEPENPEVVVDTDKNDR.

Position 9-16 (9-16 (GPSGAGKT)) interacts with ATP. Residue Ser-83 is the Phosphoserine intermediate of the active site. Residues 134-155 (LDGEYEEPENPEVVVDTDKNDR) are disordered.

Belongs to the APS kinase family.

It carries out the reaction adenosine 5'-phosphosulfate + ATP = 3'-phosphoadenylyl sulfate + ADP + H(+). The protein operates within sulfur metabolism; hydrogen sulfide biosynthesis; sulfite from sulfate: step 2/3. Its function is as follows. Catalyzes the synthesis of activated sulfate. This chain is Probable adenylyl-sulfate kinase (cysC), found in Archaeoglobus fulgidus (strain ATCC 49558 / DSM 4304 / JCM 9628 / NBRC 100126 / VC-16).